The chain runs to 539 residues: Dihydrolipoyllysine-residue acetyltransferase component 2 of pyruvate dehydrogenase complex, mitochondrial (539 aa).

The transit peptide at M1–F102 directs the protein to the mitochondrion. The disordered stretch occupies residues F102–T122. One can recognise a Lipoyl-binding domain in the interval H111 to V187. At K152 the chain carries N6-lipoyllysine. Residues F196–E244 are disordered. In terms of domain architecture, Peripheral subunit-binding (PSBD) spans F248–L285. Catalysis depends on residues H512 and D516.

Belongs to the 2-oxoacid dehydrogenase family. Requires (R)-lipoate as cofactor.

The protein localises to the mitochondrion matrix. The catalysed reaction is N(6)-[(R)-dihydrolipoyl]-L-lysyl-[protein] + acetyl-CoA = N(6)-[(R)-S(8)-acetyldihydrolipoyl]-L-lysyl-[protein] + CoA. The pyruvate dehydrogenase complex catalyzes the overall conversion of pyruvate to acetyl-CoA and CO(2). It contains multiple copies of three enzymatic components: pyruvate dehydrogenase (E1), dihydrolipoamide acetyltransferase (E2) and lipoamide dehydrogenase (E3). The polypeptide is Dihydrolipoyllysine-residue acetyltransferase component 2 of pyruvate dehydrogenase complex, mitochondrial (Arabidopsis thaliana (Mouse-ear cress)).